The primary structure comprises 316 residues: 4-hydroxyphenylacetate decarboxylase activating enzyme (316 aa).

One can recognise a Radical SAM core domain in the interval 20 to 307; the sequence is HDGPGCRTTV…QDIFLDNGIA (288 aa). Cys-34, Cys-38, Cys-41, Cys-60, Cys-66, Cys-69, and Cys-105 together coordinate [4Fe-4S] cluster. 40 to 42 lines the S-adenosyl-L-methionine pocket; sequence WCA. One can recognise a 4Fe-4S ferredoxin-type domain in the interval 84 to 115; that stretch reads NKPVIDWNICKDCESFECVNSCYYNAFKLCAK. S-adenosyl-L-methionine-binding positions include Gly-144, 193–195, and His-267; that span reads DIK.

The protein belongs to the organic radical-activating enzymes family. As to quaternary structure, monomer. The cofactor is [4Fe-4S] cluster.

It carries out the reaction glycyl-[protein] + reduced [flavodoxin] + S-adenosyl-L-methionine = glycin-2-yl radical-[protein] + semiquinone [flavodoxin] + 5'-deoxyadenosine + L-methionine + H(+). Catalyzes activation of 4-hydroxyphenylacetate decarboxylase under anaerobic conditions by generation of an organic free radical on a glycine residue, via a homolytic cleavage of S-adenosyl-L-methionine (SAM). This is 4-hydroxyphenylacetate decarboxylase activating enzyme from Clostridioides difficile (Peptoclostridium difficile).